The chain runs to 455 residues: Ribulose bisphosphate carboxylase large chain (455 aa).

N6,N6,N6-trimethyllysine is present on lysine 5. Residues asparagine 114 and threonine 164 each contribute to the substrate site. Residue lysine 166 is the Proton acceptor of the active site. Position 168 (lysine 168) interacts with substrate. Residues lysine 192, aspartate 194, and glutamate 195 each coordinate Mg(2+). Lysine 192 carries the N6-carboxylysine modification. Histidine 285 functions as the Proton acceptor in the catalytic mechanism. Substrate contacts are provided by arginine 286, histidine 318, and serine 370.

Belongs to the RuBisCO large chain family. Type I subfamily. In terms of assembly, heterohexadecamer of 8 large chains and 8 small chains; disulfide-linked. The disulfide link is formed within the large subunit homodimers. The cofactor is Mg(2+). In terms of processing, the disulfide bond which can form in the large chain dimeric partners within the hexadecamer appears to be associated with oxidative stress and protein turnover.

It localises to the plastid. The protein localises to the chloroplast. The enzyme catalyses 2 (2R)-3-phosphoglycerate + 2 H(+) = D-ribulose 1,5-bisphosphate + CO2 + H2O. It carries out the reaction D-ribulose 1,5-bisphosphate + O2 = 2-phosphoglycolate + (2R)-3-phosphoglycerate + 2 H(+). Its function is as follows. RuBisCO catalyzes two reactions: the carboxylation of D-ribulose 1,5-bisphosphate, the primary event in carbon dioxide fixation, as well as the oxidative fragmentation of the pentose substrate in the photorespiration process. Both reactions occur simultaneously and in competition at the same active site. In Vachellia farnesiana (Sweet acacia), this protein is Ribulose bisphosphate carboxylase large chain.